A 126-amino-acid chain; its full sequence is Profilin-3 (126 aa).

This sequence belongs to the profilin family. In terms of assembly, occurs in many kinds of cells as a complex with monomeric actin in a 1:1 ratio.

The protein localises to the cytoplasm. It localises to the cytoskeleton. In terms of biological role, binds to actin and affects the structure of the cytoskeleton. At high concentrations, profilin prevents the polymerization of actin, whereas it enhances it at low concentrations. By binding to PIP2, it inhibits the formation of IP3 and DG. In Dictyostelium discoideum (Social amoeba), this protein is Profilin-3 (proC).